The following is a 209-amino-acid chain: Uracil phosphoribosyltransferase (209 aa).

Residues Arg-79, Arg-104, and 131–139 (DPMLATGGS) contribute to the 5-phospho-alpha-D-ribose 1-diphosphate site. Residues Ile-194 and 199–201 (GDA) contribute to the uracil site. Asp-200 lines the 5-phospho-alpha-D-ribose 1-diphosphate pocket.

It belongs to the UPRTase family. Mg(2+) is required as a cofactor.

The enzyme catalyses UMP + diphosphate = 5-phospho-alpha-D-ribose 1-diphosphate + uracil. The protein operates within pyrimidine metabolism; UMP biosynthesis via salvage pathway; UMP from uracil: step 1/1. Its activity is regulated as follows. Allosterically activated by GTP. Functionally, catalyzes the conversion of uracil and 5-phospho-alpha-D-ribose 1-diphosphate (PRPP) to UMP and diphosphate. This is Uracil phosphoribosyltransferase from Clostridium acetobutylicum (strain ATCC 824 / DSM 792 / JCM 1419 / IAM 19013 / LMG 5710 / NBRC 13948 / NRRL B-527 / VKM B-1787 / 2291 / W).